Reading from the N-terminus, the 217-residue chain is Protein GrpE (217 aa).

The protein belongs to the GrpE family. Homodimer.

The protein resides in the cytoplasm. Participates actively in the response to hyperosmotic and heat shock by preventing the aggregation of stress-denatured proteins, in association with DnaK and GrpE. It is the nucleotide exchange factor for DnaK and may function as a thermosensor. Unfolded proteins bind initially to DnaJ; upon interaction with the DnaJ-bound protein, DnaK hydrolyzes its bound ATP, resulting in the formation of a stable complex. GrpE releases ADP from DnaK; ATP binding to DnaK triggers the release of the substrate protein, thus completing the reaction cycle. Several rounds of ATP-dependent interactions between DnaJ, DnaK and GrpE are required for fully efficient folding. In Mycoplasma genitalium (strain ATCC 33530 / DSM 19775 / NCTC 10195 / G37) (Mycoplasmoides genitalium), this protein is Protein GrpE.